The sequence spans 35 residues: Ranatuerin-2SPb (35 aa).

Cysteines 28 and 33 form a disulfide.

In terms of tissue distribution, expressed by the skin glands.

The protein resides in the secreted. Functionally, antibacterial activity against Gram-positive bacterium S.aureus. Shows no detectable hemolytic activity towards human erythrocytes. The protein is Ranatuerin-2SPb of Lithobates septentrionalis (Mink frog).